Reading from the N-terminus, the 1479-residue chain is C-type mannose receptor 2 (1479 aa).

Positions 1–30 (MGPGRPAPAPWPRHLLRCVLLLGCLHLGRP) are cleaved as a signal peptide. The Extracellular segment spans residues 31–1414 (GAPGDAALPE…PSALPENPAA (1384 aa)). The Ricin B-type lectin domain maps to 41–167 (PNVFLIFSHG…WRIYGSEEDL (127 aa)). A disulfide bridge connects residues Cys54 and Cys68. An N-linked (GlcNAc...) (complex) asparagine glycan is attached at Asn69. Cys93 and Cys112 are disulfide-bonded. Asn140 carries N-linked (GlcNAc...) asparagine glycosylation. The 49-residue stretch at 182-230 (SHGKPCTIPFKYDNQWFHGCTSTGREDGHLWCATTQDYGKDERWGFCPI) folds into the Fibronectin type-II domain. Intrachain disulfides connect Cys187–Cys213, Cys201–Cys228, Cys266–Cys359, and Cys335–Cys351. The 117-residue stretch at 244–360 (LTDSCYQFNF…CSIALPYVCK (117 aa)) folds into the C-type lectin 1 domain. The N-linked (GlcNAc...) asparagine glycan is linked to Asn364. 4 C-type lectin domains span residues 389–505 (FQGH…SICK), 528–644 (HSPS…RYIC), 678–809 (KLRY…WICK), and 832–951 (FQEA…YICK). Disulfide bonds link Cys410/Cys504 and Cys481/Cys496. N-linked (GlcNAc...) asparagine glycosylation is present at Asn588. Intrachain disulfides connect Cys618-Cys635, Cys704-Cys808, Cys785-Cys800, Cys853-Cys950, and Cys927-Cys942. N-linked (GlcNAc...) asparagine glycans are attached at residues Asn954 and Asn1029. 3 consecutive C-type lectin domains span residues 979–1107 (FLNK…GFIC), 1132–1243 (YLNG…GAVC), and 1273–1393 (FREH…GVVC). Residues Cys1078 and Cys1098 are joined by a disulfide bond. Lys1142 is covalently cross-linked (Glycyl lysine isopeptide (Lys-Gly) (interchain with G-Cter in SUMO1)). Cysteines 1220 and 1234 form a disulfide. N-linked (GlcNAc...) asparagine glycosylation is present at Asn1350. An intrachain disulfide couples Cys1369 to Cys1384. Residues 1415–1435 (LVVVLMAVLLLLALLTAALIL) form a helical membrane-spanning segment. The Cytoplasmic segment spans residues 1436 to 1479 (YRRRQSIERGAFEGARYSRSSSSPTEATEKNILVSDMEMNEQQE). The disordered stretch occupies residues 1450 to 1479 (ARYSRSSSSPTEATEKNILVSDMEMNEQQE).

In terms of assembly, interacts with C-terminal region of type I collagen/COL1A1. Interacts directly with PLAUR/UPAR and PLAU/pro-UPA to form a tri-molecular complex. Interacts with collagen V. Post-translationally, N-glycosylated. Ubiquitous with low expression in brain, placenta, lung, kidney, pancreas, spleen, thymus and colon. Expressed in endothelial cells, fibroblasts and macrophages. Highly expressed in fetal lung and kidney.

It is found in the membrane. Its function is as follows. May play a role as endocytotic lectin receptor displaying calcium-dependent lectin activity. Internalizes glycosylated ligands from the extracellular space for release in an endosomal compartment via clathrin-mediated endocytosis. May be involved in plasminogen activation system controlling the extracellular level of PLAUR/PLAU, and thus may regulate protease activity at the cell surface. May contribute to cellular uptake, remodeling and degradation of extracellular collagen matrices. May play a role during cancer progression as well as in other chronic tissue destructive diseases acting on collagen turnover. May participate in remodeling of extracellular matrix cooperating with the matrix metalloproteinases (MMPs). This Homo sapiens (Human) protein is C-type mannose receptor 2 (MRC2).